We begin with the raw amino-acid sequence, 570 residues long: Rqc2 homolog RqcH (570 aa).

An NFACT-N domain region spans residues Met1 to Pro173. Residues Asp179–Lys281 are hhH domain. Coiled-coil stretches lie at residues Phe279–Leu336 and Thr368–Lys430. The coiled-coil-M (CCM) stretch occupies residues Ala282–Pro434. The tract at residues His446–Ser570 is NFACT-R.

It belongs to the NEMF family. As to quaternary structure, associates with isolated or stalled 50S ribosomal subunits. Binds to RqcP. Interacts with ribosomal protein uL11. Displaced from the 50S subunit by thiostrepton. In crystallized 50S subunits RqcH is variously associated with A/P-site tRNA, P-site tRNA and RqcP, an E-site tRNA or A- and P-site tRNAs and RqcP2(YlmH).

Its function is as follows. Key component of the ribosome quality control system (RQC), a ribosome-associated complex that mediates the extraction of incompletely synthesized nascent chains from stalled ribosomes and their subsequent degradation. RqcH recruits Ala-charged tRNA, and with RqcP directs the elongation of stalled nascent chains on 50S ribosomal subunits, leading to non-templated C-terminal alanine extensions (Ala tail). The Ala tail promotes nascent chain degradation. RqcH, RqcP and charged tRNA(Ala) are necessary and sufficient to add an Ala tail to a model stalled nascent peptide; does not add Val. Binds the P-site tRNA in 50S ribosomal subunit, unwinds the anticodon stem and interacts with the splayed anticodon. Selectively binds tRNA(Ala) isoacceptors, even in the absence of the 50S ribosomal subunit. Adds between 1 and at least 8 Ala residues to the nascent chain; detection of the Ala tail requires either deletion of clpP or its inhibition. Binds to 50S ribosomal subunits, at least 30% of which contain a P-site tRNA and thus are obstructed. In Bacillus subtilis (strain 168), this protein is Rqc2 homolog RqcH.